We begin with the raw amino-acid sequence, 208 residues long: Methylthioribulose-1-phosphate dehydratase (208 aa).

Zn(2+) is bound by residues His98 and His100.

This sequence belongs to the aldolase class II family. MtnB subfamily. Zn(2+) is required as a cofactor.

The catalysed reaction is 5-(methylsulfanyl)-D-ribulose 1-phosphate = 5-methylsulfanyl-2,3-dioxopentyl phosphate + H2O. It participates in amino-acid biosynthesis; L-methionine biosynthesis via salvage pathway; L-methionine from S-methyl-5-thio-alpha-D-ribose 1-phosphate: step 2/6. Functionally, catalyzes the dehydration of methylthioribulose-1-phosphate (MTRu-1-P) into 2,3-diketo-5-methylthiopentyl-1-phosphate (DK-MTP-1-P). This chain is Methylthioribulose-1-phosphate dehydratase, found in Hahella chejuensis (strain KCTC 2396).